We begin with the raw amino-acid sequence, 382 residues long: MSARPITIGLVAGETSGDILGAGLIRALRGHLPEARFVGVAGPRMQAEGMEAWYDMEELAVMGIVEVVERLPRLLRIRRDLTRRFTALRPDVFVGIDAPDFTITLEGRLKRRGIRTIHYVSPSVWAWRQKRVFKIGRATDNVLAFLPFEKAFYDCYNVPCQFIGHTLADAMSLDPDKAAARQALGIAAEARCLALLPGSRQSEVAMLSADFLRAAERLYECFPGLEIVVPLVNPARRAQFEHILVAVAPALPVRLLDNQARQAMIAADAALLASGTASLECMLAKCPMVVGYRMKPLTFALARRLVKTPWVSLPNLLAGRELVKELLQEACQPEALAAALEPLLDDDDQRAALLAMFRQLHQQIRCNADEQAARAVLALINR.

This sequence belongs to the LpxB family.

The catalysed reaction is 2-N,3-O-bis[(3R)-3-hydroxytetradecanoyl]-alpha-D-glucosaminyl 1-phosphate + UDP-2-N,3-O-bis[(3R)-3-hydroxytetradecanoyl]-alpha-D-glucosamine = lipid A disaccharide (E. coli) + UDP + H(+). It catalyses the reaction a lipid X + a UDP-2-N,3-O-bis[(3R)-3-hydroxyacyl]-alpha-D-glucosamine = a lipid A disaccharide + UDP + H(+). The protein operates within glycolipid biosynthesis; lipid IV(A) biosynthesis; lipid IV(A) from (3R)-3-hydroxytetradecanoyl-[acyl-carrier-protein] and UDP-N-acetyl-alpha-D-glucosamine: step 5/6. In terms of biological role, condensation of UDP-2,3-diacylglucosamine and 2,3-diacylglucosamine-1-phosphate to form lipid A disaccharide, a precursor of lipid A, a phosphorylated glycolipid that anchors the lipopolysaccharide to the outer membrane of the cell. This chain is Lipid-A-disaccharide synthase, found in Sodalis glossinidius (strain morsitans).